The primary structure comprises 233 residues: uncharacterized protein (233 aa).

Belongs to the RHS family.

This is an uncharacterized protein from Escherichia coli (strain K12).